Consider the following 155-residue polypeptide: Effector protein PevD1 (155 aa).

Positions 1–18 are cleaved as a signal peptide; that stretch reads MQFTLAAAAALFGASALA. An AA1-like domain is found at 33–148; that stretch reads NMYENIDIAD…NPTTIVIDSL (116 aa). 2 cysteine pairs are disulfide-bonded: Cys-70-Cys-84 and Cys-125-Cys-135.

In terms of assembly, monomer. Interacts with Arabidopsis thaliana NRP.

It is found in the secreted. In terms of biological role, effector protein. Elicits a hypersensitive response (HR) in tobacco plants (N.tabacum) and cotton (G.hirsutum). Boosts systemic acquired resistance (SAR) to tobacco mosaic virus (TMV) infection in N.tabacum and to V.dhaliae infection in primed cotton seedlings. This Verticillium dahliae (Verticillium wilt) protein is Effector protein PevD1.